The chain runs to 120 residues: Large ribosomal subunit protein uL18 (120 aa).

Belongs to the universal ribosomal protein uL18 family. In terms of assembly, part of the 50S ribosomal subunit; part of the 5S rRNA/L5/L18/L25 subcomplex. Contacts the 5S and 23S rRNAs.

This is one of the proteins that bind and probably mediate the attachment of the 5S RNA into the large ribosomal subunit, where it forms part of the central protuberance. This chain is Large ribosomal subunit protein uL18, found in Xanthobacter autotrophicus (strain ATCC BAA-1158 / Py2).